Reading from the N-terminus, the 156-residue chain is Arginine repressor (156 aa).

This sequence belongs to the ArgR family.

It localises to the cytoplasm. Its pathway is amino-acid biosynthesis; L-arginine biosynthesis [regulation]. In terms of biological role, regulates arginine biosynthesis genes. The sequence is that of Arginine repressor from Tolumonas auensis (strain DSM 9187 / NBRC 110442 / TA 4).